Here is a 393-residue protein sequence, read N- to C-terminus: Biotin synthase, mitochondrial (393 aa).

The N-terminal 20 residues, 1 to 20 (MSVSFTRSFPRAFIRSYGTV), are a transit peptide targeting the mitochondrion. Residues 81–310 (SAIQMCTLMN…ATIVRLAAGR (230 aa)) enclose the Radical SAM core domain. [4Fe-4S] cluster is bound by residues Cys96, Cys100, and Cys103. [2Fe-2S] cluster is bound by residues Cys140, Cys173, Cys233, and Arg305. Positions 366–393 (NAATPQQHVDSVAHESEKNPAAPAAEAL) are disordered.

Belongs to the radical SAM superfamily. Biotin synthase family. [4Fe-4S] cluster is required as a cofactor. [2Fe-2S] cluster serves as cofactor.

It is found in the mitochondrion. The enzyme catalyses (4R,5S)-dethiobiotin + (sulfur carrier)-SH + 2 reduced [2Fe-2S]-[ferredoxin] + 2 S-adenosyl-L-methionine = (sulfur carrier)-H + biotin + 2 5'-deoxyadenosine + 2 L-methionine + 2 oxidized [2Fe-2S]-[ferredoxin]. It participates in cofactor biosynthesis; biotin biosynthesis; biotin from 7,8-diaminononanoate: step 2/2. Functionally, biotin synthase; part of the cluster involved in the biosynthesis of biotin (also known as vitamin B8 or vitamin H), a water-soluble vitamin that functions as a prosthetic group of many carboxylases, such as acetyl-CoA carboxylase and pyruvate carboxylase. Catalyzes the conversion of dethiobiotin (DTB) to biotin by the insertion of a sulfur atom into dethiobiotin via a radical-based mechanism. This Emericella nidulans (strain FGSC A4 / ATCC 38163 / CBS 112.46 / NRRL 194 / M139) (Aspergillus nidulans) protein is Biotin synthase, mitochondrial.